A 142-amino-acid polypeptide reads, in one-letter code: NTF2-related export protein 2 (142 aa).

One can recognise an NTF2 domain in the interval Ala17–Phe136.

Associates with NXF1, NXF2, NXF3 and NXF5.

The protein localises to the nucleus. The protein resides in the cytoplasm. Regulator of protein export for NES-containing proteins. Also plays a role in mRNA nuclear export. The polypeptide is NTF2-related export protein 2 (Nxt2) (Mus musculus (Mouse)).